A 401-amino-acid polypeptide reads, in one-letter code: 1-deoxy-D-xylulose 5-phosphate reductoisomerase (401 aa).

7 residues coordinate NADPH: Thr-11, Gly-12, Ser-13, Ile-14, Arg-38, Asn-39, and Asn-125. A 1-deoxy-D-xylulose 5-phosphate-binding site is contributed by Lys-126. Glu-127 provides a ligand contact to NADPH. A Mn(2+)-binding site is contributed by Asp-151. 4 residues coordinate 1-deoxy-D-xylulose 5-phosphate: Ser-152, Glu-153, Ser-179, and His-202. Glu-153 serves as a coordination point for Mn(2+). Gly-208 lines the NADPH pocket. The 1-deoxy-D-xylulose 5-phosphate site is built by Ser-215, Asn-220, Lys-221, and Glu-224. Residue Glu-224 coordinates Mn(2+).

The protein belongs to the DXR family. Mg(2+) is required as a cofactor. The cofactor is Mn(2+).

The enzyme catalyses 2-C-methyl-D-erythritol 4-phosphate + NADP(+) = 1-deoxy-D-xylulose 5-phosphate + NADPH + H(+). It participates in isoprenoid biosynthesis; isopentenyl diphosphate biosynthesis via DXP pathway; isopentenyl diphosphate from 1-deoxy-D-xylulose 5-phosphate: step 1/6. Catalyzes the NADPH-dependent rearrangement and reduction of 1-deoxy-D-xylulose-5-phosphate (DXP) to 2-C-methyl-D-erythritol 4-phosphate (MEP). This Paraburkholderia phytofirmans (strain DSM 17436 / LMG 22146 / PsJN) (Burkholderia phytofirmans) protein is 1-deoxy-D-xylulose 5-phosphate reductoisomerase.